The chain runs to 277 residues: Putative hydro-lyase SCO1412 (277 aa).

It belongs to the D-glutamate cyclase family.

In Streptomyces coelicolor (strain ATCC BAA-471 / A3(2) / M145), this protein is Putative hydro-lyase SCO1412.